The following is a 295-amino-acid chain: Sulfotransferase 1E1 (295 aa).

48-53 (KSGTTW) lines the 3'-phosphoadenylyl sulfate pocket. 106–108 (KSH) provides a ligand contact to substrate. Catalysis depends on His108, which acts as the Proton acceptor. The 3'-phosphoadenylyl sulfate site is built by Arg130, Ser138, and Tyr193. A phosphoserine; by PKA mark is found at Ser216 and Ser228. 3'-phosphoadenylyl sulfate-binding positions include 227 to 232 (TSFQEM) and 257 to 259 (RKG).

It belongs to the sulfotransferase 1 family. Homodimer.

It is found in the cytoplasm. The protein localises to the cytosol. It catalyses the reaction estrone + 3'-phosphoadenylyl sulfate = estrone 3-sulfate + adenosine 3',5'-bisphosphate + H(+). The enzyme catalyses (24S)-hydroxycholesterol + 3'-phosphoadenylyl sulfate = (24S)-hydroxycholesterol 3-sulfate + adenosine 3',5'-bisphosphate + H(+). The catalysed reaction is 17beta-estradiol + 3'-phosphoadenylyl sulfate = 17beta-estradiol 3-sulfate + adenosine 3',5'-bisphosphate + H(+). It carries out the reaction 3beta-hydroxyandrost-5-en-17-one + 3'-phosphoadenylyl sulfate = dehydroepiandrosterone 3-sulfate + adenosine 3',5'-bisphosphate + H(+). It catalyses the reaction 4-ethylphenol + 3'-phosphoadenylyl sulfate = 4-ethylphenyl sulfate + adenosine 3',5'-bisphosphate + H(+). Inhibited by estradiol. Sulfotransferase that utilizes 3'-phospho-5'-adenylyl sulfate (PAPS) as sulfonate donor to catalyze the sulfate conjugation of estradiol and estrone. Is a key enzyme in estrogen homeostasis, the sulfation of estrogens leads to their inactivation. Also sulfates dehydroepiandrosterone (DHEA), pregnenolone, (24S)-hydroxycholesterol and xenobiotic compounds like ethinylestradiol, equalenin, diethyl stilbesterol and 1-naphthol at significantly lower efficiency. Does not sulfonate cortisol, testosterone and dopamine. May play a role in gut microbiota-host metabolic interaction. O-sulfonates 4-ethylphenol (4-EP), a dietary tyrosine-derived metabolite produced by gut bacteria. The product 4-EPS crosses the blood-brain barrier and may negatively regulate oligodendrocyte maturation and myelination, affecting the functional connectivity of different brain regions associated with the limbic system. This is Sulfotransferase 1E1 (SULT1E1) from Bos taurus (Bovine).